A 75-amino-acid chain; its full sequence is ATP synthase subunit c (75 aa).

The next 2 helical transmembrane spans lie at Leu-13–Phe-33 and Phe-55–Ile-75.

The protein belongs to the ATPase C chain family. F-type ATPases have 2 components, F(1) - the catalytic core - and F(0) - the membrane proton channel. F(1) has five subunits: alpha(3), beta(3), gamma(1), delta(1), epsilon(1). F(0) has three main subunits: a(1), b(2) and c(10-14). The alpha and beta chains form an alternating ring which encloses part of the gamma chain. F(1) is attached to F(0) by a central stalk formed by the gamma and epsilon chains, while a peripheral stalk is formed by the delta and b chains.

The protein localises to the cell membrane. F(1)F(0) ATP synthase produces ATP from ADP in the presence of a proton or sodium gradient. F-type ATPases consist of two structural domains, F(1) containing the extramembraneous catalytic core and F(0) containing the membrane proton channel, linked together by a central stalk and a peripheral stalk. During catalysis, ATP synthesis in the catalytic domain of F(1) is coupled via a rotary mechanism of the central stalk subunits to proton translocation. In terms of biological role, key component of the F(0) channel; it plays a direct role in translocation across the membrane. A homomeric c-ring of between 10-14 subunits forms the central stalk rotor element with the F(1) delta and epsilon subunits. The protein is ATP synthase subunit c of Bifidobacterium longum (strain DJO10A).